Here is a 278-residue protein sequence, read N- to C-terminus: Methyltransferase adrK (278 aa).

Residues 124 to 125 (DL), 151 to 152 (DV), and 152 to 153 (VL) each bind S-adenosyl-L-methionine.

Belongs to the class I-like SAM-binding methyltransferase superfamily. As to quaternary structure, homodimer.

The protein operates within secondary metabolite biosynthesis; terpenoid biosynthesis. Its function is as follows. Methyltransferase; part of the gene cluster that mediates the biosynthesis of andrastins, meroterpenoid compounds that exhibit inhibitory activity against ras farnesyltransferase, suggesting that they could be promising leads for antitumor agents. The first step of the pathway is the synthesis of 3,5-dimethylorsellinic acid (DMOA) by the polyketide synthase adrD via condensation of one acetyl-CoA starter unit with 3 malonyl-CoA units and 2 methylations. DMAO is then converted to farnesyl-DMAO by the prenyltransferase adrG. The methyltransferase adrK catalyzes the methylation of the carboxyl group of farnesyl-DMAO to farnesyl-DMAO methyl ester which is further converted to epoxyfarnesyl-DMAO methyl ester by the FAD-dependent monooxygenase adrH. The terpene cyclase adrI then catalyzes the carbon skeletal rearrangement to generate the andrastin E, the first compound in the pathway having the andrastin scaffold, with the tetracyclic ring system. The post-cyclization tailoring enzymes adrF, adrE, adrJ, and adrA, are involved in the conversion of andrastin E into andrastin A. The short chain dehydrogenase adrF is responsible for the oxidation of the C-3 a hydroxyl group of andrastin E to yield the corresponding ketone, andrastin D. The ketoreductase adrE stereoselectively reduces the carbonyl moiety to reverse the stereochemistry of the C-3 position to yield andrastin F. The acetyltransferase adrJ is the acetyltransferase that attaches the acetyl group to the C-3 hydroxyl group of andrastin F to yield andrastin C. Finally, the cytochrome P450 monooxygenase adrA catalyzes two sequential oxidation reactions of the C-23 methyl group, to generate the corresponding alcohol andrastin B, and aldehyde andrastin A. In Penicillium roqueforti, this protein is Methyltransferase adrK.